The following is a 486-amino-acid chain: MDLSAKDEFSAEKRNPDNYDSVNNPSGDWRVDSYPSENLISAGPASCSPSQMMDSFGQTLWYDPTSVQAVGYAGFNGGNASSSSFRGSIDRSLEMGWNLPNLLPPKGNGLFLPNASSFLPPSMAQFPADSGFIERAARFSLFSGGNFSDMVNQPLGNSEAIGLFLQGGGTMQGQCQSNELNVGEPHNDVSVAVKESTVRSSEQAKPNVPGSGNVSEDTQSSGGNGQKGRETSSNTKKRKRNGQKNSEAAQSHRSQQSEEEPDNNGDEKRNDEQSPNSPGKKSNSGKQQGKQSSDPPKDGYIHVRARRGQATNSHSLAERVRREKISERMKFLQDLVPGCNKVTGKAVMLDEIINYVQSLQRQVEFLSMKLATVNPQMDFNLEGLLAKDALQLRAGSSSTTPFPPNMSMAYPPLPHGFMQQTLSSIGRTITSPLSPMNGGFKRQETNGWEGDLQNVIHINYGAGDVTPDPQAAATASLPAANMKVEP.

Residues 1–17 (MDLSAKDEFSAEKRNPD) are compositionally biased toward basic and acidic residues. Disordered stretches follow at residues 1-30 (MDLS…GDWR) and 194-300 (KEST…KDGY). Composition is skewed to polar residues over residues 198 to 221 (VRSS…TQSS) and 243 to 254 (QKNSEAAQSHRS). The segment covering 273–293 (QSPNSPGKKSNSGKQQGKQSS) has biased composition (low complexity). In terms of domain architecture, bHLH spans 309-359 (QATNSHSLAERVRREKISERMKFLQDLVPGCNKVTGKAVMLDEIINYVQSL).

In terms of assembly, homodimer. Interacts with IBH1. In terms of tissue distribution, expressed constitutively in roots, stems, and flowers.

The protein localises to the nucleus. Functionally, transcriptional activator involved in cell elongation. Regulates the expression of a subset of genes involved in cell expansion by binding to the G-box motif. This chain is Transcription factor bHLH49 (BHLH49), found in Arabidopsis thaliana (Mouse-ear cress).